We begin with the raw amino-acid sequence, 71 residues long: Movement protein TGBp3 (71 aa).

Topologically, residues Met-1–Ala-3 are lumenal. A helical membrane pass occupies residues Gly-4–Leu-26. Residues Thr-27–Gln-71 are Cytoplasmic-facing.

This sequence belongs to the Tymovirales TGBp3 protein family.

Its subcellular location is the host endoplasmic reticulum membrane. Functionally, plays a role in viral cell-to-cell propagation, by facilitating genome transport to neighboring plant cells through plasmosdesmata. May induce the formation of granular vesicles derived from the Endoplasmic reticulum, which align on actin filaments. This is Movement protein TGBp3 from Brassica campestris (Field mustard).